Reading from the N-terminus, the 462-residue chain is Aquaporin-1 (462 aa).

Residues 1 to 11 (MTMRSPLTNDH) show a composition bias toward polar residues. A disordered region spans residues 1 to 24 (MTMRSPLTNDHPQPLRASPLSEHD). Over 1–146 (MTMRSPLTND…KWMNSDWKNH (146 aa)) the chain is Cytoplasmic. Residues 147–167 (IVAVIGELIGTSLFLFFGYAG) traverse the membrane as a helical segment. At 168 to 182 (IEVAKLQGREPPDLE) the chain is on the extracellular side. Residues 183 to 203 (VLFYISATFGASLMVTAWIFF) form a helical membrane-spanning segment. Over 204 to 229 (RISGGLFNPAVTLALAILKAVSPIRA) the chain is Cytoplasmic. The short motif at 211–213 (NPA) is the NPA 1 element. The helical transmembrane segment at 230 to 250 (FLLVITQLGASCLAAILVQEI) threads the bilayer. Over 251–269 (FPKQLDVATTLGSGTSMGQ) the chain is Extracellular. Residues 270-290 (GFVIEAITTAALIFTIIMLAV) traverse the membrane as a helical segment. The Cytoplasmic segment spans residues 291–296 (EKHKAT). A helical membrane pass occupies residues 297–317 (FVAPIGIGLALFVAHMVAVPF). Over 318-341 (TGASLNPARSFGPSAIVWNFPREH) the chain is Extracellular. Positions 323-325 (NPA) match the NPA 2 motif. A helical membrane pass occupies residues 342–362 (WIYWVGPILGAGLAVLFFRLI). Residues 363 to 462 (KLMEYEMANP…WRRQQYRNVV (100 aa)) are Cytoplasmic-facing. The interval 407–433 (GKSWYRDDSSSGSMRRKESVNSFTGGR) is disordered. The segment covering 410-425 (WYRDDSSSGSMRRKES) has biased composition (basic and acidic residues).

It belongs to the MIP/aquaporin (TC 1.A.8) family.

It is found in the membrane. It catalyses the reaction H2O(in) = H2O(out). Its function is as follows. Water channel required to facilitate the transport of water across membranes. Involved in conidiation. This Botryotinia fuckeliana (strain B05.10) (Noble rot fungus) protein is Aquaporin-1.